A 499-amino-acid chain; its full sequence is MWGIIVPFFSASLMCSLVAVVRCQQDTDHFANVTNTIDSLLKGYDIRLRPSFGGAPLEIGIEVILASFDSISEVDMDYTITMYLNQYWRDERLQFIFNESLDLGENRSVTTMTLTGAFAEKIWVPDTFLANDKNSFLHDITEKNKMVRLYGNGSLVYGMRFTTTLACMMDLHNYPLDHQECTVEIESYGYTMDDIVLYWLNDRGAVTGVEDVSLPQFSITNYATINKIEELSTGDYQRLSLIFQLQRNIGYFIFQTYLPSILIVMLSWVSFWINHEATSARVALGITTVLTMTTISNGVRSSLPRISYVKAIDIYLVMCFVFVFAALLEYAAVNYTYWGARAKRKAKRLRERATSVRKRVDDGDQMNNTNMDTVELKEVHMVPTSVGVTNSQSFNLDLDDGSGDDTGFRVVPPIPRSFTHSHATTHGYIPTNVVRRRSSSHVPPRRRRLLSHFRQKAKSIKVKIPRVQDVNTIDKYARLMFPLLFIIFNTSYWSVYLLT.

An N-terminal signal peptide occupies residues 1 to 23; sequence MWGIIVPFFSASLMCSLVAVVRC. Residues 24 to 251 lie on the Extracellular side of the membrane; the sequence is QQDTDHFANV…IFQLQRNIGY (228 aa). N-linked (GlcNAc...) asparagine glycosylation is found at Asn-32, Asn-98, Asn-106, and Asn-152. A disulfide bond links Cys-167 and Cys-181. Transmembrane regions (helical) follow at residues 252 to 273, 278 to 299, and 311 to 333; these read FIFQ…SFWI, TSAR…SNGV, and AIDI…YAAV. Topologically, residues 334–475 are cytoplasmic; the sequence is NYTYWGARAK…RVQDVNTIDK (142 aa). A helical transmembrane segment spans residues 476–499; that stretch reads YARLMFPLLFIIFNTSYWSVYLLT.

The protein belongs to the ligand-gated ion channel (TC 1.A.9) family. Gamma-aminobutyric acid receptor (TC 1.A.9.5) subfamily. As to quaternary structure, generally pentameric. There are five types of GABA(A) receptor chains: alpha, beta, gamma, delta, and rho.

It localises to the postsynaptic cell membrane. It is found in the cell membrane. Its function is as follows. GABA, an inhibitory neurotransmitter, mediates neuronal inhibition by binding to the GABA/benzodiazepine receptor and opening an integral chloride channel. This Lymnaea stagnalis (Great pond snail) protein is Gamma-aminobutyric acid receptor subunit beta.